Reading from the N-terminus, the 224-residue chain is Serum amyloid P-component (224 aa).

Residues 1–19 (MERLLLWVSVLASLPEAFA) form the signal peptide. A Pentraxin (PTX) domain is found at 24 to 224 (TGKVFVFPRE…YVVIKPRVWS (201 aa)). Residue N51 is glycosylated (N-linked (GlcNAc...) asparagine). The cysteines at positions 55 and 114 are disulfide-linked. Ca(2+)-binding residues include D77, N78, E155, Q156, D157, and Q167.

Belongs to the pentraxin family. Homopentamer. Pentraxin (or pentaxin) have a discoid arrangement of 5 non-covalently bound subunits. It depends on Ca(2+) as a cofactor.

The protein resides in the secreted. The chain is Serum amyloid P-component (APCS) from Sus scrofa (Pig).